We begin with the raw amino-acid sequence, 211 residues long: uncharacterized protein (211 aa).

The protein belongs to the A.longa ORF167/ORF288 family.

It localises to the plastid. This is an uncharacterized protein from Euglena longa (Euglenophycean alga).